A 277-amino-acid chain; its full sequence is Inositol monophosphatase 1 (277 aa).

4 residues coordinate Mg(2+): E70, D90, I92, and D93. Position 70 (E70) interacts with substrate. Substrate is bound at residue 92–95 (IDGT). At T168 the chain carries Phosphothreonine. Residues 194-196 (GTA), E213, and D220 each bind substrate. Position 220 (D220) interacts with Mg(2+).

This sequence belongs to the inositol monophosphatase superfamily. Homodimer. Mg(2+) serves as cofactor.

Its subcellular location is the cytoplasm. It carries out the reaction a myo-inositol phosphate + H2O = myo-inositol + phosphate. The catalysed reaction is 1D-myo-inositol 1-phosphate + H2O = myo-inositol + phosphate. It catalyses the reaction 1D-myo-inositol 2-phosphate + H2O = myo-inositol + phosphate. The enzyme catalyses 1D-myo-inositol 3-phosphate + H2O = myo-inositol + phosphate. It carries out the reaction 1D-myo-inositol 4-phosphate + H2O = myo-inositol + phosphate. The catalysed reaction is 1D-myo-inositol 5-phosphate + H2O = myo-inositol + phosphate. It catalyses the reaction 1D-myo-inositol 6-phosphate + H2O = myo-inositol + phosphate. The enzyme catalyses scyllo-inositol 1-phosphate + H2O = scyllo-inositol + phosphate. It carries out the reaction alpha-D-galactose 1-phosphate + H2O = D-galactose + phosphate. The catalysed reaction is alpha-D-glucose 1-phosphate + H2O = D-glucose + phosphate. It catalyses the reaction D-glucose 6-phosphate + H2O = D-glucose + phosphate. The enzyme catalyses beta-D-fructose 1-phosphate + H2O = D-fructose + phosphate. It carries out the reaction glycerol 2-phosphate + H2O = glycerol + phosphate. The catalysed reaction is adenosine 2'-phosphate + H2O = adenosine + phosphate. The protein operates within polyol metabolism; myo-inositol biosynthesis; myo-inositol from D-glucose 6-phosphate: step 2/2. Inhibited by Li(+), Ca(2+) and Mn(2+), but also by Mg(2+) at concentrations above 3 mM. In terms of biological role, phosphatase involved in the dephosphorylation of myo-inositol monophosphate to generate myo-inositol. Is also able to dephosphorylate scyllo-inositol-phosphate, myo-inositol 1,4-diphosphate, scyllo-inositol-1,3-diphosphate and scyllo-inositol-1,4-diphosphate. Also dephosphorylates in vitro other sugar-phosphates including D-galactose-1-phosphate, glucose-1-phosphate, glucose-6-phosphate, fructose-1-phosphate, beta-glycerophosphate and 2'-AMP. Responsible for the provision of inositol required for synthesis of phosphatidylinositol and polyphosphoinositides, and involved in maintaining normal brain function. Has been implicated as the pharmacological target for lithium Li(+) action in brain. The protein is Inositol monophosphatase 1 (IMPA1) of Pongo abelii (Sumatran orangutan).